A 237-amino-acid chain; its full sequence is V-type proton ATPase subunit E3 (237 aa).

Methionine 1 bears the N-acetylmethionine mark. Residues 9–67 adopt a coiled-coil conformation; it reads QIQQMVRFIRQEAEEKANEISISSEEEFNIEKLQLVEAEKKKIRQEYEKKEKQVDVRKK.

It belongs to the V-ATPase E subunit family. V-ATPase is a heteromultimeric enzyme composed of a peripheral catalytic V1 complex (components A to H) attached to an integral membrane V0 proton pore complex (components: a, c, c'', d and e).

It localises to the vacuole membrane. Functionally, subunit of the peripheral V1 complex of vacuolar ATPase essential for assembly or catalytic function. V-ATPase is responsible for acidifying a variety of intracellular compartments in eukaryotic cells. This chain is V-type proton ATPase subunit E3 (VHA-E3), found in Arabidopsis thaliana (Mouse-ear cress).